We begin with the raw amino-acid sequence, 1264 residues long: Regulator of G-protein signaling 22 (1264 aa).

Residues 565 to 587 (EEFSLSQPPKSPNKSPEVKTATQ) form a disordered region. The span at 568–578 (SLSQPPKSPNK) shows a compositional bias: polar residues. 2 RGS domains span residues 852–980 (KFSD…AARQ) and 1021–1145 (AFRK…TDEN). Residues 1142 to 1174 (TDENIMSVLERRQEYNKQKKKLAVLEDEKSGKD) are a coiled coil.

Interacts with GNA11, GNA12 and GNA13. As to expression, testis-specific. Expressed in Leydig cells and spermatogenic cells from the spermatogonia to spermatid stages (at protein level).

Its subcellular location is the cytoplasm. It is found in the nucleus. Its function is as follows. Inhibits signal transduction by increasing the GTPase activity of G protein alpha subunits thereby driving them into their inactive GDP-bound form. The protein is Regulator of G-protein signaling 22 (RGS22) of Homo sapiens (Human).